Reading from the N-terminus, the 169-residue chain is Putative lipocalin R877 (169 aa).

Positions 1–18 (MWIIILIVIIVIITIIFS) are cleaved as a signal peptide.

Belongs to the calycin superfamily. Lipocalin family.

It is found in the secreted. It localises to the virion. Its function is as follows. Could play a role in the transport of a small ligand. This Acanthamoeba polyphaga mimivirus (APMV) protein is Putative lipocalin R877.